Consider the following 436-residue polypeptide: Divalent metal cation transporter MntH (436 aa).

The segment covering 1-22 (MDSRSPSLPDDRPDPPEQHLDA) has biased composition (basic and acidic residues). Positions 1–31 (MDSRSPSLPDDRPDPPEQHLDARAGATLRGT) are disordered. The next 11 membrane-spanning stretches (helical) occupy residues 40 to 60 (ILPF…PGNF), 71 to 91 (GYSL…IQNL), 115 to 135 (LVWF…LAEF), 144 to 164 (LLTG…TFWL), 177 to 197 (LAVG…VVLA), 216 to 236 (GSAY…VIYL), 264 to 284 (VIAA…VAAA), 304 to 324 (LTPL…LASG), 354 to 374 (LITM…SSVL), 375 to 395 (ILSQ…LLLF), and 411 to 431 (FTVI…YLLW).

The protein belongs to the NRAMP family.

The protein resides in the cell membrane. H(+)-stimulated, divalent metal cation uptake system. This is Divalent metal cation transporter MntH from Deinococcus radiodurans (strain ATCC 13939 / DSM 20539 / JCM 16871 / CCUG 27074 / LMG 4051 / NBRC 15346 / NCIMB 9279 / VKM B-1422 / R1).